The chain runs to 232 residues: Adenosylcobinamide-GDP ribazoletransferase (232 aa).

7 consecutive transmembrane segments (helical) span residues 24–44 (LWAF…ILYL), 46–66 (IPLA…LLHL), 96–116 (IAGV…LSML), 117–137 (PFYA…LGLA), 153–173 (GMNG…YLPV), 174–194 (VIYD…WYVI), and 210–230 (GAMA…SLCF).

This sequence belongs to the CobS family. Requires Mg(2+) as cofactor.

It localises to the cell membrane. The catalysed reaction is alpha-ribazole + adenosylcob(III)inamide-GDP = adenosylcob(III)alamin + GMP + H(+). It carries out the reaction alpha-ribazole 5'-phosphate + adenosylcob(III)inamide-GDP = adenosylcob(III)alamin 5'-phosphate + GMP + H(+). It participates in cofactor biosynthesis; adenosylcobalamin biosynthesis; adenosylcobalamin from cob(II)yrinate a,c-diamide: step 7/7. Joins adenosylcobinamide-GDP and alpha-ribazole to generate adenosylcobalamin (Ado-cobalamin). Also synthesizes adenosylcobalamin 5'-phosphate from adenosylcobinamide-GDP and alpha-ribazole 5'-phosphate. In Pyrococcus abyssi (strain GE5 / Orsay), this protein is Adenosylcobinamide-GDP ribazoletransferase.